The sequence spans 311 residues: tRNA-cytidine(32) 2-sulfurtransferase (311 aa).

Residues 47–52 carry the PP-loop motif motif; sequence SGGKDS. Residues C122, C125, and C213 each contribute to the [4Fe-4S] cluster site.

The protein belongs to the TtcA family. As to quaternary structure, homodimer. It depends on Mg(2+) as a cofactor. [4Fe-4S] cluster is required as a cofactor.

The protein localises to the cytoplasm. It catalyses the reaction cytidine(32) in tRNA + S-sulfanyl-L-cysteinyl-[cysteine desulfurase] + AH2 + ATP = 2-thiocytidine(32) in tRNA + L-cysteinyl-[cysteine desulfurase] + A + AMP + diphosphate + H(+). The protein operates within tRNA modification. In terms of biological role, catalyzes the ATP-dependent 2-thiolation of cytidine in position 32 of tRNA, to form 2-thiocytidine (s(2)C32). The sulfur atoms are provided by the cysteine/cysteine desulfurase (IscS) system. The sequence is that of tRNA-cytidine(32) 2-sulfurtransferase from Escherichia coli O127:H6 (strain E2348/69 / EPEC).